We begin with the raw amino-acid sequence, 265 residues long: Hydroxyacylglutathione hydrolase (265 aa).

Zn(2+) contacts are provided by H53, H55, D57, H58, H109, D126, and H164.

It belongs to the metallo-beta-lactamase superfamily. Glyoxalase II family. In terms of assembly, monomer. Zn(2+) serves as cofactor.

It carries out the reaction an S-(2-hydroxyacyl)glutathione + H2O = a 2-hydroxy carboxylate + glutathione + H(+). It functions in the pathway secondary metabolite metabolism; methylglyoxal degradation; (R)-lactate from methylglyoxal: step 2/2. Thiolesterase that catalyzes the hydrolysis of S-D-lactoyl-glutathione to form glutathione and D-lactic acid. The polypeptide is Hydroxyacylglutathione hydrolase (Dechloromonas aromatica (strain RCB)).